The primary structure comprises 252 residues: Body wall muscle protein HR-29 (252 aa).

S2 bears the N-acetylserine mark. 3 repeat units span residues 37-55 (RDWM…RDLS), 56-74 (QDWM…RDLS), and 75-93 (QDWM…RNLS). The segment at 37–93 (RDWMTTPYSSTGIGRRDLSQDWMTTPYTPAGVGRRDLSQDWMTTPYTSKGIGSRNLS) is 3 X 19 AA approximate tandem repeats. A sHSP domain is found at 138–249 (ISVEHEGKTT…KKTAVPVTVE (112 aa)).

Belongs to the small heat shock protein (HSP20) family. Exists as an oligomer.

The protein localises to the membrane. May be a component of myofibrils where it acts as a stabilizer. The protein is Body wall muscle protein HR-29 of Halocynthia roretzi (Sea squirt).